Consider the following 457-residue polypeptide: DNA repair protein RadA (457 aa).

The segment at 10–27 (CQECGYESAKWMGKCPGC) adopts a C4-type zinc-finger fold. 97-104 (GDPGIGKS) lines the ATP pocket. A RadA KNRFG motif motif is present at residues 254–258 (KNRFG). Positions 353 to 457 (DAYVNVAGGV…QDALEVTLGR (105 aa)) are lon-protease-like.

This sequence belongs to the RecA family. RadA subfamily.

Its function is as follows. DNA-dependent ATPase involved in processing of recombination intermediates, plays a role in repairing DNA breaks. Stimulates the branch migration of RecA-mediated strand transfer reactions, allowing the 3' invading strand to extend heteroduplex DNA faster. Binds ssDNA in the presence of ADP but not other nucleotides, has ATPase activity that is stimulated by ssDNA and various branched DNA structures, but inhibited by SSB. Does not have RecA's homology-searching function. This chain is DNA repair protein RadA, found in Halalkalibacterium halodurans (strain ATCC BAA-125 / DSM 18197 / FERM 7344 / JCM 9153 / C-125) (Bacillus halodurans).